Consider the following 152-residue polypeptide: MTEYKKVIAQNKKALFNYFIEERLEAGIVLKGSEVRSLRQGKASIEESHAADTRHEVFLYNCHIAEYEKANRFNHATRRPRKLLLHTKEIKKIIGRIRIKGYTLVALSMYFNKKNKVKVELGIAKGKKLHDKRESIKEKDWKRDQSRLIRQK.

It belongs to the SmpB family.

The protein resides in the cytoplasm. Its function is as follows. Required for rescue of stalled ribosomes mediated by trans-translation. Binds to transfer-messenger RNA (tmRNA), required for stable association of tmRNA with ribosomes. tmRNA and SmpB together mimic tRNA shape, replacing the anticodon stem-loop with SmpB. tmRNA is encoded by the ssrA gene; the 2 termini fold to resemble tRNA(Ala) and it encodes a 'tag peptide', a short internal open reading frame. During trans-translation Ala-aminoacylated tmRNA acts like a tRNA, entering the A-site of stalled ribosomes, displacing the stalled mRNA. The ribosome then switches to translate the ORF on the tmRNA; the nascent peptide is terminated with the 'tag peptide' encoded by the tmRNA and targeted for degradation. The ribosome is freed to recommence translation, which seems to be the essential function of trans-translation. The protein is SsrA-binding protein of Rickettsia conorii (strain ATCC VR-613 / Malish 7).